Here is a 156-residue protein sequence, read N- to C-terminus: Bacterial microcompartment shell protein PduK (156 aa).

Positions 4–89 constitute a BMC domain; it reads SLGLLEVSGL…PGDGILSHSV (86 aa). The interval 81–119 is disordered; that stretch reads GDGILSHSVTPESESEPAPAPTPVVPHEEIPEDHAAPEA. The segment covering 106–116 has biased composition (basic and acidic residues); it reads PHEEIPEDHAA.

It belongs to the bacterial microcompartments protein family. Interacts with shell protein PduA and assembly protein PduM. Interacts with PduP, probably with its first 18 residues. The cofactor is Fe cation.

It localises to the bacterial microcompartment. Its pathway is polyol metabolism; 1,2-propanediol degradation. Its function is as follows. A minor shell protein of the bacterial microcompartment (BMC) dedicated to 1,2-propanediol (1,2-PD) degradation. Functionally, expression of a cosmid containing the full 21-gene pdu operon in E.coli allows E.coli to grow on 1,2-propanediol (1,2-PD) with the appearance of bacterial microcompartments (BMC) in its cytoplasm. Overexpression of this protein leads to the appearance of a single large aggregate complex in the cytoplasm. In terms of biological role, the 1,2-PD-specific bacterial microcompartment (BMC) concentrates low levels of 1,2-PD catabolic enzymes, concentrates volatile reaction intermediates thus enhancing pathway flux and keeps the level of toxic, mutagenic propionaldehyde low. The protein is Bacterial microcompartment shell protein PduK of Citrobacter freundii.